The sequence spans 551 residues: MAMAGADGPTAGAAAAVRWRGGESLLLLLLRWPSSAELVAAWGAARASAVAPALAAASAACLALSAMLLADAVLMAAACFARRRPDRRYRATPLGAGAGADDDDDDEEAGRVAYPMVLVQIPMYNEREVYKLSIGAACGLSWPSDRLIVQVLDDSTDPTVKGLVELECKSWGNKGKNVKYEVRNTRKGYKAGALKEGLLRDYVQQCNYVAIFDADFQPEPDFLLRTIPYLVRNPQIGLVQAHWEFVNTSECLMTRIQKMTLHYHFKVEQEGGSSTFAFFGFNGTAGVWRISALEEAGGWKDRTTVEDMDLAVRAGLKGWKFVYLADVKVKSELPSNLKTYRHQQHRWTCGAANLFRKVGAEILFTKEVPFWWKFYLLYSFFFVRKVVAHVVPFMLYCVVIPFSVLIPEVTVPVWGVVYVPTTITLLHAIRNTSSIHFIPFWILFENVMSFHRTKAMFIGLLELGGVNEWVVTEKLGNGSNTKPASQILERPPCRFWDRWTMSEILFSIFLFFCATYNLAYGGDYYFVYIYLQAIAFLVVGIGFCGTISSNS.

Residues 60-80 (ACLALSAMLLADAVLMAAACF) form a helical membrane-spanning segment. Asp154 is an active-site residue. Residues Asp213 and Asp215 each coordinate substrate. Asp307 is an active-site residue. The next 4 membrane-spanning stretches (helical) occupy residues 386–406 (VVAH…SVLI), 409–429 (VTVP…LHAI), 504–524 (ILFS…GGDY), and 525–545 (YFVY…GFCG).

It belongs to the glycosyltransferase 2 family. Plant cellulose synthase-like A subfamily.

The protein localises to the golgi apparatus membrane. The catalysed reaction is GDP-mannose + (glucomannan)n = GDP + (glucomannan)n+1.. Its function is as follows. Probable mannan synthase which consists of a 4-beta-mannosyltransferase activity on mannan using GDP-mannose. The beta-1,4-mannan product is the backbone for galactomannan synthesis by galactomannan galactosyltransferase. Galactomannan is a noncellulosic polysaccharides of plant cell wall. The polypeptide is Probable glucomannan 4-beta-mannosyltransferase 3 (Oryza sativa subsp. japonica (Rice)).